The sequence spans 201 residues: Small ribosomal subunit protein eS1 (201 aa).

It belongs to the eukaryotic ribosomal protein eS1 family.

The chain is Small ribosomal subunit protein eS1 from Methanoregula boonei (strain DSM 21154 / JCM 14090 / 6A8).